The sequence spans 498 residues: Probable malate:quinone oxidoreductase 2 (498 aa).

Belongs to the MQO family. Requires FAD as cofactor.

It carries out the reaction (S)-malate + a quinone = a quinol + oxaloacetate. It functions in the pathway carbohydrate metabolism; tricarboxylic acid cycle; oxaloacetate from (S)-malate (quinone route): step 1/1. The sequence is that of Probable malate:quinone oxidoreductase 2 from Staphylococcus aureus (strain COL).